The chain runs to 205 residues: Holliday junction branch migration complex subunit RuvA (205 aa).

A domain I region spans residues Met-1–Lys-62. Residues Thr-63–Leu-141 are domain II. The flexible linker stretch occupies residues Phe-142–Lys-152. Residues Gly-153–Arg-205 are domain III.

Belongs to the RuvA family. Homotetramer. Forms an RuvA(8)-RuvB(12)-Holliday junction (HJ) complex. HJ DNA is sandwiched between 2 RuvA tetramers; dsDNA enters through RuvA and exits via RuvB. An RuvB hexamer assembles on each DNA strand where it exits the tetramer. Each RuvB hexamer is contacted by two RuvA subunits (via domain III) on 2 adjacent RuvB subunits; this complex drives branch migration. In the full resolvosome a probable DNA-RuvA(4)-RuvB(12)-RuvC(2) complex forms which resolves the HJ.

It localises to the cytoplasm. In terms of biological role, the RuvA-RuvB-RuvC complex processes Holliday junction (HJ) DNA during genetic recombination and DNA repair, while the RuvA-RuvB complex plays an important role in the rescue of blocked DNA replication forks via replication fork reversal (RFR). RuvA specifically binds to HJ cruciform DNA, conferring on it an open structure. The RuvB hexamer acts as an ATP-dependent pump, pulling dsDNA into and through the RuvAB complex. HJ branch migration allows RuvC to scan DNA until it finds its consensus sequence, where it cleaves and resolves the cruciform DNA. The sequence is that of Holliday junction branch migration complex subunit RuvA from Bacillus mycoides (strain KBAB4) (Bacillus weihenstephanensis).